The chain runs to 163 residues: Ribonuclease P protein component (163 aa).

A disordered region spans residues 1-68 (MDEKDVATQP…GGKLLSLKGD (68 aa)). Residues 8–19 (TQPQETGQNPRL) are compositionally biased toward polar residues.

It belongs to the RnpA family. Consists of a catalytic RNA component (M1 or rnpB) and a protein subunit.

It carries out the reaction Endonucleolytic cleavage of RNA, removing 5'-extranucleotides from tRNA precursor.. RNaseP catalyzes the removal of the 5'-leader sequence from pre-tRNA to produce the mature 5'-terminus. It can also cleave other RNA substrates such as 4.5S RNA. The protein component plays an auxiliary but essential role in vivo by binding to the 5'-leader sequence and broadening the substrate specificity of the ribozyme. This Thermus thermophilus (strain ATCC BAA-163 / DSM 7039 / HB27) protein is Ribonuclease P protein component.